The primary structure comprises 593 residues: SPI-1 type 3 secretion system translocon protein SctE (593 aa).

2 coiled-coil regions span residues 151–208 (DTAK…ATDA) and 287–314 (EGRQAEMEKKSAEFQEETRKAEETNRIM). The next 2 helical transmembrane spans lie at 330-350 (VVAAVFTGGASLALAAVGLAV) and 409-429 (IVGAIVAAIAMVAVIVVVAVV).

This sequence belongs to the SctE/SipB/YopB family. As to quaternary structure, the core secretion machinery of the T3SS is composed of approximately 20 different proteins, including cytoplasmic components, a base, an export apparatus and a needle. This subunit is involved in the formation of a pore, called the translocon, in host membrane.

The protein resides in the secreted. The protein localises to the host membrane. Functionally, component of the type III secretion system 1 (SPI-1 T3SS), also called injectisome, which is used to inject bacterial effector proteins into eukaryotic host cells. SipB/SctE1 and SipC/SctB are inserted into the host membrane where they form a pore and allow the translocation of effector proteins into the cytosol of target cells. This Salmonella dublin protein is SPI-1 type 3 secretion system translocon protein SctE.